Consider the following 259-residue polypeptide: Proteasome subunit alpha (259 aa).

It belongs to the peptidase T1A family. As to quaternary structure, the 20S proteasome core is composed of 14 alpha and 14 beta subunits that assemble into four stacked heptameric rings, resulting in a barrel-shaped structure. The two inner rings, each composed of seven catalytic beta subunits, are sandwiched by two outer rings, each composed of seven alpha subunits. The catalytic chamber with the active sites is on the inside of the barrel. Has a gated structure, the ends of the cylinder being occluded by the N-termini of the alpha-subunits. Is capped at one or both ends by the proteasome regulatory ATPase, PAN.

The protein resides in the cytoplasm. Its activity is regulated as follows. The formation of the proteasomal ATPase PAN-20S proteasome complex, via the docking of the C-termini of PAN into the intersubunit pockets in the alpha-rings, triggers opening of the gate for substrate entry. Interconversion between the open-gate and close-gate conformations leads to a dynamic regulation of the 20S proteasome proteolysis activity. Component of the proteasome core, a large protease complex with broad specificity involved in protein degradation. The sequence is that of Proteasome subunit alpha from Methanococcus maripaludis (strain C6 / ATCC BAA-1332).